Reading from the N-terminus, the 154-residue chain is Endoribonuclease YbeY (154 aa).

Positions 116, 120, and 126 each coordinate Zn(2+).

It belongs to the endoribonuclease YbeY family. The cofactor is Zn(2+).

Its subcellular location is the cytoplasm. Functionally, single strand-specific metallo-endoribonuclease involved in late-stage 70S ribosome quality control and in maturation of the 3' terminus of the 16S rRNA. The chain is Endoribonuclease YbeY from Buchnera aphidicola subsp. Baizongia pistaciae (strain Bp).